The primary structure comprises 357 residues: MGGAVSAGEDNDDLIDNLKEAQYIRTERVEQAFRAIDRGDYYLEGYRDNAYKDLAWKHGNIHLSAPCIYSEVMEALKLQPGLSFLNLGSGTGYLSTMVGLILGPFGINHGIELHSDVVEYAKEKLESFIKNSDSFDKFEFCEPAFVVGNCLQIASDSHQYDRIYCGAGVQKDHENYMKILLKVGGILVMPIEDQLTQIMRTGQNTWESKNILAVSFAPLVQPSKNDNGKPDSVGLPPCAVRNLQDLARIYIRRTLRNFINDEMQAKGIPQRAPPKRKRKRVKQRINTYVFVGNQLIPQPLDSEEDEKMEEDNKEEEEKDHNEAMKPEEPPQNLLREKIMKLPLPESLKAYLTYFRDK.

Glycine 2 carries the N-myristoyl glycine lipid modification. Serine 64 is an active-site residue. AdoMet binding motif regions lie at residues 85–94, 160–164, and 181–191; these read LNLGSGTGYL, YDRIY, and LKVGGILVMPI. Positions 240 to 250 are BC-box; sequence VRNLQDLARIY. The interval 299-333 is disordered; that stretch reads PLDSEEDEKMEEDNKEEEEKDHNEAMKPEEPPQNL. The span at 301-317 shows a compositional bias: acidic residues; sequence DSEEDEKMEEDNKEEEE. Basic and acidic residues predominate over residues 318–333; sequence KDHNEAMKPEEPPQNL. Positions 341–344 are CUL-box; the sequence is LPLP.

The protein belongs to the methyltransferase superfamily. L-isoaspartyl/D-aspartyl protein methyltransferase family. As to quaternary structure, component of the probable ECS(PCMTD1) E3 ubiquitin-protein ligase complex, at least composed of CUL5, ELOB, ELOC, RBX2 and PCMTD1. Interacts (via the BC-box) with ELOB and ELOC; the interaction is direct and stabilizes PCMTD1.

It is found in the cytoplasm. Its subcellular location is the membrane. Functionally, substrate recognition component of an ECS (Elongin BC-CUL5-SOCS-box protein) E3 ubiquitin ligase complex which mediates the ubiquitination and subsequent proteasomal degradation of target proteins. Specifically binds to the methyltransferase cofactor S-adenosylmethionine (AdoMet) via the N-terminal AdoMet binding motif, but does not display methyltransferase activity. May provide an alternate maintenance pathway for modified proteins by acting as a damage-specific E3 ubiquitin ligase adaptor protein. This is Protein-L-isoaspartate O-methyltransferase domain-containing protein 1 from Homo sapiens (Human).